The following is a 489-amino-acid chain: Nuclear distribution protein PAC1 (489 aa).

The stretch at S66–G98 forms a coiled coil. 7 WD repeats span residues Q119 to P158, A164 to N205, G206 to S246, G249 to M291, I328 to H368, G389 to S428, and G437 to K486.

This sequence belongs to the WD repeat LIS1/nudF family. As to quaternary structure, self-associates. Interacts with NDL1 and dynein.

The protein localises to the cytoplasm. It is found in the cytoskeleton. The protein resides in the spindle pole. Functionally, positively regulates the activity of the minus-end directed microtubule motor protein dynein. Plays a central role in positioning the mitotic spindle at the bud neck during cell division. Targets cytoplasmic dynein to microtubule plus ends, thereby promoting dynein-mediated microtubule sliding along the bud cortex and consequently the movement of the mitotic spindle to the bud neck. This is Nuclear distribution protein PAC1 from Candida dubliniensis (strain CD36 / ATCC MYA-646 / CBS 7987 / NCPF 3949 / NRRL Y-17841) (Yeast).